Reading from the N-terminus, the 440-residue chain is Xylose isomerase (440 aa).

Active-site residues include His-100 and Asp-103. The Mg(2+) site is built by Glu-231, Glu-267, His-270, Asp-295, Asp-306, Asp-308, and Asp-338.

This sequence belongs to the xylose isomerase family. Homotetramer. Requires Mg(2+) as cofactor.

Its subcellular location is the cytoplasm. The catalysed reaction is alpha-D-xylose = alpha-D-xylulofuranose. The sequence is that of Xylose isomerase from Burkholderia cenocepacia (strain ATCC BAA-245 / DSM 16553 / LMG 16656 / NCTC 13227 / J2315 / CF5610) (Burkholderia cepacia (strain J2315)).